Consider the following 261-residue polypeptide: Ethanolamine ammonia-lyase small subunit (261 aa).

The adenosylcob(III)alamin site is built by Val-157, Glu-178, and Cys-207.

This sequence belongs to the EutC family. As to quaternary structure, the basic unit is a heterodimer which dimerizes to form tetramers. The heterotetramers trimerize; 6 large subunits form a core ring with 6 small subunits projecting outwards. The cofactor is adenosylcob(III)alamin.

The protein localises to the bacterial microcompartment. It carries out the reaction ethanolamine = acetaldehyde + NH4(+). It functions in the pathway amine and polyamine degradation; ethanolamine degradation. Functionally, catalyzes the deamination of various vicinal amino-alcohols to oxo compounds. Allows this organism to utilize ethanolamine as the sole source of nitrogen and carbon in the presence of external vitamin B12. The protein is Ethanolamine ammonia-lyase small subunit of Rhodopseudomonas palustris (strain BisA53).